Here is an 84-residue protein sequence, read N- to C-terminus: Toxin To7 (84 aa).

The signal sequence occupies residues 1 to 20 (MSIFPIVLALLLIGLEETEA). Residues 21–83 (LDGYPLSKIN…KMYPGSSPCY (63 aa)) form the LCN-type CS-alpha/beta domain. 4 cysteine pairs are disulfide-bonded: Cys32–Cys82, Cys36–Cys59, Cys42–Cys64, and Cys46–Cys66.

Expressed by the venom gland.

Its subcellular location is the secreted. Its function is as follows. Inhibits voltage-gated sodium channels (Nav). The polypeptide is Toxin To7 (Tityus obscurus (Amazonian scorpion)).